The chain runs to 100 residues: Large ribosomal subunit protein bL21 (100 aa).

The protein belongs to the bacterial ribosomal protein bL21 family. Part of the 50S ribosomal subunit. Contacts protein L20.

This protein binds to 23S rRNA in the presence of protein L20. The sequence is that of Large ribosomal subunit protein bL21 from Paramagnetospirillum magneticum (strain ATCC 700264 / AMB-1) (Magnetospirillum magneticum).